A 59-amino-acid chain; its full sequence is DNA-directed RNA polymerase subunit Rpo6 (59 aa).

The protein belongs to the archaeal Rpo6/eukaryotic RPB6 RNA polymerase subunit family. As to quaternary structure, part of the RNA polymerase complex.

The protein localises to the cytoplasm. It carries out the reaction RNA(n) + a ribonucleoside 5'-triphosphate = RNA(n+1) + diphosphate. In terms of biological role, DNA-dependent RNA polymerase (RNAP) catalyzes the transcription of DNA into RNA using the four ribonucleoside triphosphates as substrates. The sequence is that of DNA-directed RNA polymerase subunit Rpo6 from Halorubrum lacusprofundi (strain ATCC 49239 / DSM 5036 / JCM 8891 / ACAM 34).